The following is a 283-amino-acid chain: MDKALISHQEGDQLYDELCHAFFVRSNNGKLHLAPVERPKCVLDLGCGAGVWATEFGERLSDREILWTWALKTGNCSQGVSFMSGPDVPNCQFIAADIQNEWTWLAQHKVDFIHIRGLVGFIHSWPDLLRRVHASLAPGGWLEIADLGPHTLSDDGSLSQAQGLLQFDKLSDKMLGTMGQQVGLVTRLGDMMETAGFQDVSESTRKTPLSDWSDDVEMRQMASTSAALHEMDFRMIASRGLQPVLNLSSEKVEHVLSDALHDMHNKRIHAYKLRYTFTGCKRD.

The protein belongs to the methyltransferase superfamily. LaeA methyltransferase family.

It carries out the reaction campesine A + S-adenosyl-L-methionine = campesine B + S-adenosyl-L-homocysteine + H(+). It participates in alkaloid biosynthesis. In terms of biological role, methyltransferase; part of the gene cluster that mediates the biosynthesis of campesine G, a dimeric indole piperazine alkaloid that shows good insecticidal activity Galleria mellonella. Within the pathway, cpsF methylates campesine A at N13 of piperazine ring to produce campesine B. The non-canonical non-ribosomal peptide synthetase cpsA catalyzes the first steps of the pathway by producing L-tryptophanal and L-valinal from their respective amino-acids. These products condensate spontaneously to form trypyl-valyl pyrazine also known as didehydrocampesine A. The NmrA-like family domain-containing oxidoreductase cpsB is the next enzyme in cps pathway and reduces the unstable didehydrocampesine A to campesine A. The methyltransferase cpsF and the acetyltransferase cpsE both recognize N13 of piperazine ring to carry out methylation and acetylation of campesine A to produce campesine C and B, respectively. The cytochrome P450 monooxygenase cpsD then acts as a dimerase that catalyzes oxidative heterocoupling between campesine B and C to produce heterodimers with unexpected 6/5/6/6/6/6/5/6 eight-ring scaffold called campesine D. Finally,the cytochrome P450 monooxygenase cpsC is a regioselective dehydrogenase that catalyzes dehydrogenation reaction towards C2-N1 to produce campesine G. The sequence is that of Methyltransferase cpsF from Aspergillus campestris (strain IBT 28561).